The primary structure comprises 622 residues: Threonine--tRNA ligase (622 aa).

An editing domain region spans residues 1–136; sequence MKTLLIHSDY…PLSELSRKIT (136 aa). A catalytic region spans residues 199–498; the sequence is PHVKYIKEKE…TLENKPPALP (300 aa). Positions 291, 343, and 467 each coordinate Zn(2+).

Belongs to the class-II aminoacyl-tRNA synthetase family. As to quaternary structure, homodimer. It depends on Zn(2+) as a cofactor.

The protein localises to the cytoplasm. The enzyme catalyses tRNA(Thr) + L-threonine + ATP = L-threonyl-tRNA(Thr) + AMP + diphosphate + H(+). Its function is as follows. Catalyzes the attachment of threonine to tRNA(Thr) in a two-step reaction: L-threonine is first activated by ATP to form Thr-AMP and then transferred to the acceptor end of tRNA(Thr). Also edits incorrectly charged L-seryl-tRNA(Thr). In Methanococcus maripaludis (strain DSM 14266 / JCM 13030 / NBRC 101832 / S2 / LL), this protein is Threonine--tRNA ligase.